Consider the following 1275-residue polypeptide: Mediator of RNA polymerase II transcription subunit 33B (1275 aa).

The span at 772–791 shows a compositional bias: low complexity; sequence GSQSLTPSSGSSSLSTSGGD. The disordered stretch occupies residues 772–792; sequence GSQSLTPSSGSSSLSTSGGDD.

It belongs to the Mediator complex subunit 33 family. In terms of assembly, component of the Mediator complex. As to expression, ubiquitous.

Its subcellular location is the nucleus. Functionally, component of the Mediator complex, a coactivator involved in the regulated transcription of nearly all RNA polymerase II-dependent genes. Mediator functions as a bridge to convey information from gene-specific regulatory proteins to the basal RNA polymerase II transcription machinery. The Mediator complex, having a compact conformation in its free form, is recruited to promoters by direct interactions with regulatory proteins and serves for the assembly of a functional preinitiation complex with RNA polymerase II and the general transcription factors. Involved in the repression of phenylpropanoid biosynthesis. May compete with MED33B for common binding partners or for occupancy in Mediator. The chain is Mediator of RNA polymerase II transcription subunit 33B (MED33B) from Arabidopsis thaliana (Mouse-ear cress).